The following is a 181-amino-acid chain: Bradykinin potentiating and C-type natriuretic peptides (181 aa).

Residues 1–23 (MFVSRLAASGLLLLALLAVSLDG) form the signal peptide. The propeptide occupies 24 to 27 (KPLQ). Residues Gln-28 and Gln-31 each carry the pyrrolidone carboxylic acid modification. The propeptide occupies 41–43 (LVV). Gln-44 is subject to Pyrrolidone carboxylic acid. Positions 50–52 (TQL) are excised as a propeptide. Position 53 is a pyrrolidone carboxylic acid (Gln-53). Residues 59–159 (AGGTTALREE…ARRLKGLAKK (101 aa)) constitute a propeptide that is removed on maturation. Positions 74 to 150 (EAALDTPPAG…GGGCGGGGGA (77 aa)) are disordered. Positions 104 to 114 (SKGASATSAAS) are enriched in low complexity. Residues 140–150 (AGGGCGGGGGA) are compositionally biased toward gly residues. A disulfide bridge links Cys-165 with Cys-181.

In the N-terminal section; belongs to the bradykinin-potentiating peptide family. It in the C-terminal section; belongs to the natriuretic peptide family. Venom gland.

Its subcellular location is the secreted. Its function is as follows. Bradykinin-potentiating peptide both inhibits the activity of the angiotensin-converting enzyme (ACE) and enhances the action of bradykinin by inhibiting the peptidases that inactivate it. It acts as an indirect hypotensive agent. Synthetic Cdt1a, Cdt1b and the short hexapeptide Cdt3 are able to potentiate the hypotensive effect mediated by Bk on the blood pressure of anesthetized rats. Has a vasorelaxant activity in rat aortic strips and a diuretic potency in anesthetized rats. May act by activating natriuretic receptors (NPR1 and/or NPR2). This chain is Bradykinin potentiating and C-type natriuretic peptides, found in Crotalus durissus terrificus (South American rattlesnake).